Here is a 339-residue protein sequence, read N- to C-terminus: NADH-quinone oxidoreductase subunit H (339 aa).

9 helical membrane-spanning segments follow: residues 9 to 29, 50 to 70, 82 to 102, 115 to 135, 161 to 181, 187 to 207, 235 to 255, 275 to 295, and 311 to 331; these read IFPL…LILC, PNVV…KLLF, ILFI…WAVI, VGVL…IIAG, MGLV…SGII, MPWW…ISVL, MGFA…SAMT, IPGF…FLWI, and GWKV…SVLV.

This sequence belongs to the complex I subunit 1 family. As to quaternary structure, NDH-1 is composed of 14 different subunits. Subunits NuoA, H, J, K, L, M, N constitute the membrane sector of the complex.

It localises to the cell inner membrane. The catalysed reaction is a quinone + NADH + 5 H(+)(in) = a quinol + NAD(+) + 4 H(+)(out). In terms of biological role, NDH-1 shuttles electrons from NADH, via FMN and iron-sulfur (Fe-S) centers, to quinones in the respiratory chain. The immediate electron acceptor for the enzyme in this species is believed to be ubiquinone. Couples the redox reaction to proton translocation (for every two electrons transferred, four hydrogen ions are translocated across the cytoplasmic membrane), and thus conserves the redox energy in a proton gradient. This subunit may bind ubiquinone. This Rickettsia conorii (strain ATCC VR-613 / Malish 7) protein is NADH-quinone oxidoreductase subunit H.